The primary structure comprises 262 residues: MAALSCLLDSVRRDIKKVDRELRQLRCIDEFSTRCLCDLYMHPYCCCDLHPYPYCLCYSKRSRSCGLCDLYPCCLCDVKLYCLRPSLRSLERKAIRAIEDEKRELAKLRRTTNRILASSCCSSNILGSVNVCGFEPDQVKVRVKDGKVCVSAERENRYDCLGSKKYSYMNICKEFSLPPCVDEKDVTYSYGLGSCVKIESPCYPCTSPCNPCNPCSPCNPCNPCNPCNPCSPCSPCSPCNPCDPCNPCYPCGSRFSCRKMIL.

Phosphoserine is present on residues Ser-5 and Ser-10. Copy 1 of the repeat occupies 34 to 38 (RCLCD). The segment at 34 to 77 (RCLCDLYMHPYCCCDLHPYPYCLCYSKRSRSCGLCDLYPCCLCD) is 2 X 5 AA repeats of [RC]-C-L-C-D. At Ser-64 the chain carries Phosphoserine. Residues 73 to 77 (CCLCD) form repeat 2. Phosphoserine occurs at positions 86, 122, 123, 151, 167, 189, and 194. The segment at 209-250 (CNPCNPCSPCNPCNPCNPCNPCSPCSPCSPCNPCDPCNPCYP) is C-X-P repeat region.

As to quaternary structure, interacts (via leucine zipper motif) with TCP11. Interacts with SPAG4. Interacts with KLC3. Interacts with CCDC42.

The protein localises to the cell projection. Its subcellular location is the cilium. The protein resides in the flagellum. It is found in the cytoplasm. It localises to the cytoskeleton. The protein localises to the microtubule organizing center. Its subcellular location is the centrosome. Component of the outer dense fibers (ODF) of spermatozoa. ODF are filamentous structures located on the outside of the axoneme in the midpiece and principal piece of the mammalian sperm tail and may help to maintain the passive elastic structures and elastic recoil of the sperm tail. In Sus scrofa (Pig), this protein is Outer dense fiber protein 1 (ODF1).